Reading from the N-terminus, the 561-residue chain is Protein NRT1/ PTR FAMILY 5.13 (561 aa).

A helical transmembrane segment spans residues 78–98 (AWSGISTILPLLGAFVADAFL). A Phosphothreonine modification is found at Thr103. A run of 10 helical transmembrane segments spans residues 104-124 (IIIA…SAFL), 133-153 (SSPS…VAIG), 183-203 (FFNW…LVVV), 211-231 (WALG…LFVL), 324-344 (IPVW…MTFF), 361-381 (IPPA…VPIY), 405-425 (IGTG…VESK), 447-467 (IWWL…TLVG), 486-506 (AIYL…IYLI), and 530-550 (YFYW…LFIS).

Belongs to the major facilitator superfamily. Proton-dependent oligopeptide transporter (POT/PTR) (TC 2.A.17) family. As to expression, expressed in roots, flowers and siliques. Detected in stems and leaves.

Its subcellular location is the membrane. This is Protein NRT1/ PTR FAMILY 5.13 (NPF5.13) from Arabidopsis thaliana (Mouse-ear cress).